Consider the following 690-residue polypeptide: Proprotein convertase subtilisin/kexin type 9 (690 aa).

A signal peptide spans 1 to 28; sequence MGTVSSRRSWWPLPLLLLLLLGPAGARA. Residues 29-150 constitute a propeptide that is removed on maturation; it reads QEDEDGDYEE…IEEDSSVFAQ (122 aa). Position 36 is a sulfotyrosine (Y36). Residue S45 is modified to Phosphoserine. The 73-residue stretch at 75 to 147 folds into the Inhibitor I9 domain; sequence TYVVVLKEET…VDYIEEDSSV (73 aa). A Peptidase S8 domain is found at 153 to 459; sequence PWNLERITPP…GWQLFCRTVW (307 aa). Catalysis depends on charge relay system residues D184 and H224. 2 cysteine pairs are disulfide-bonded: C221–C253 and C321–C356. The active-site Charge relay system is the S384. The tract at residues 448–690 is C-terminal domain; it reads GAGWQLFCRT…HLVQASQELQ (243 aa). 3 disulfide bridges follow: C455/C525, C475/C524, and C484/C507. N531 carries an N-linked (GlcNAc...) asparagine glycan. Disulfide bonds link C532/C599, C550/C598, C560/C586, C606/C677, C624/C676, and C633/C652. S686 bears the Phosphoserine mark.

This sequence belongs to the peptidase S8 family. As to quaternary structure, monomer. Can self-associate to form dimers and higher multimers which may have increased LDLR degrading activity. The precursor protein but not the mature protein may form multimers. Interacts with APOB, VLDLR, LRP8/APOER2 and BACE1. The full-length immature form (pro-PCSK9) interacts with SCNN1A, SCNN1B and SCNN1G. The pro-PCSK9 form (via C-terminal domain) interacts with LDLR. Interacts (via the C-terminal domain) with ANXA2 (via repeat Annexin 1); the interaction inhibits the degradation of LDLR. The cofactor is Ca(2+). Post-translationally, cleavage by furin and PCSK5 generates a truncated inactive protein that is unable to induce LDLR degradation. Undergoes autocatalytic cleavage in the endoplasmic reticulum to release the propeptide from the N-terminus and the cleavage of the propeptide is strictly required for its maturation and activation. The cleaved propeptide however remains associated with the catalytic domain through non-covalent interactions, preventing potential substrates from accessing its active site. As a result, it is secreted from cells as a propeptide-containing, enzymatically inactive protein. In terms of processing, phosphorylation protects the propeptide against proteolysis.

The protein localises to the cytoplasm. The protein resides in the secreted. It is found in the endosome. It localises to the lysosome. Its subcellular location is the cell surface. The protein localises to the endoplasmic reticulum. The protein resides in the golgi apparatus. Its proteolytic activity is autoinhibited by the non-covalent binding of the propeptide to the catalytic domain. Inhibited by EGTA. Its function is as follows. Crucial player in the regulation of plasma cholesterol homeostasis. Binds to low-density lipid receptor family members: low density lipoprotein receptor (LDLR), very low density lipoprotein receptor (VLDLR), apolipoprotein E receptor (LRP1/APOER) and apolipoprotein receptor 2 (LRP8/APOER2), and promotes their degradation in intracellular acidic compartments. Acts via a non-proteolytic mechanism to enhance the degradation of the hepatic LDLR through a clathrin LDLRAP1/ARH-mediated pathway. May prevent the recycling of LDLR from endosomes to the cell surface or direct it to lysosomes for degradation. Can induce ubiquitination of LDLR leading to its subsequent degradation. Inhibits intracellular degradation of APOB via the autophagosome/lysosome pathway in a LDLR-independent manner. Involved in the disposal of non-acetylated intermediates of BACE1 in the early secretory pathway. Inhibits epithelial Na(+) channel (ENaC)-mediated Na(+) absorption by reducing ENaC surface expression primarily by increasing its proteasomal degradation. Regulates neuronal apoptosis via modulation of LRP8/APOER2 levels and related anti-apoptotic signaling pathways. This chain is Proprotein convertase subtilisin/kexin type 9 (PCSK9), found in Gorilla gorilla gorilla (Western lowland gorilla).